The following is a 147-amino-acid chain: Large ribosomal subunit protein uL15 (147 aa).

The span at 1–13 shows a compositional bias: basic and acidic residues; sequence MELHSLKAAEGSR. Residues 1–57 form a disordered region; sequence MELHSLKAAEGSRKVRNRVGRGTSSGNGKTSGRGQKGQKSRSGGGVRPGFEGGQTEL. Composition is skewed to gly residues over residues 23-35 and 42-52; these read TSSGNGKTSGRGQ and SGGGVRPGFEG.

The protein belongs to the universal ribosomal protein uL15 family. In terms of assembly, part of the 50S ribosomal subunit.

In terms of biological role, binds to the 23S rRNA. The sequence is that of Large ribosomal subunit protein uL15 from Lactococcus lactis subsp. cremoris (strain MG1363).